An 836-amino-acid chain; its full sequence is Spliceosome associated factor 3, U4/U6 recycling protein (836 aa).

HAT repeat units lie at residues 127-163 (EDFKFCRDVCSKALENLGTRYDSGGHIWLIFLEYEMS), 296-329 (KLPQVAVKVYSRALRHCPYSFVLHQQALLAFERD), 331-367 (RPNEEIDALWERARSNVINSAEEGRSLYRTYAFLLRR), 418-451 (KNMDKCRNIWNDILASGFGRFAGKWIEAVRLERQ), and 453-486 (GDKENARKYLNKALNSVSDNINEIYMYYVQFERE). Positions 507 to 585 (RAIRPQKKVS…APGSFAVQKA (79 aa)) are disordered. The segment covering 540–550 (IVKKVKGDDGG) has biased composition (basic and acidic residues). The segment covering 558–579 (SNAKSSSAVSSSNASSTPAPGS) has biased composition (low complexity). RRM domains are found at residues 593–668 (RTIF…ANDP) and 683–760 (SKVF…LSNP). Disordered stretches follow at residues 757-786 (LSNPPVKKDKSHGKPAAIGASLEEDGPRKG) and 811-830 (AMDVSEGTSTSQPLSNDQFR). Residues 816–827 (EGTSTSQPLSND) show a composition bias toward polar residues.

In terms of assembly, forms a complex composed of sart-3, terminal uridylyltransferase usip-1 and U6 snRNA; complex formation is mediated by usip-1 and sart-3 binding to U6 snRNA. Associates with U4 and U6 snRNP complexes, probably by interacting with U4 and U6 snRNAs. Ubiquitously expressed.

Its subcellular location is the nucleus. The protein resides in the nucleoplasm. Its function is as follows. U6 snRNP-binding protein that functions as a recycling factor of the splicing machinery. Promotes the initial reassembly of U4 and U6 snRNPs following their ejection from the spliceosome during its maturation. The chain is Spliceosome associated factor 3, U4/U6 recycling protein from Caenorhabditis elegans.